Consider the following 119-residue polypeptide: UPF0102 protein HI_1656 (119 aa).

This sequence belongs to the UPF0102 family.

In Haemophilus influenzae (strain ATCC 51907 / DSM 11121 / KW20 / Rd), this protein is UPF0102 protein HI_1656.